We begin with the raw amino-acid sequence, 646 residues long: Macrolide export ATP-binding/permease protein MacB (646 aa).

The 239-residue stretch at 5–243 (IELKGVSRTY…TLPKTNRIRQ (239 aa)) folds into the ABC transporter domain. ATP is bound at residue 41–48 (GASGSGKS). Transmembrane regions (helical) follow at residues 272 to 292 (TLTM…VALG), 518 to 538 (FSIL…IGVM), 570 to 590 (IIEA…LSYI), and 611 to 631 (AAVA…YLPA).

This sequence belongs to the ABC transporter superfamily. Macrolide exporter (TC 3.A.1.122) family. Homodimer. Part of the tripartite efflux system MacAB-TolC, which is composed of an inner membrane transporter, MacB, a periplasmic membrane fusion protein, MacA, and an outer membrane component, TolC. The complex forms a large protein conduit and can translocate molecules across both the inner and outer membranes. Interacts with MacA.

The protein resides in the cell inner membrane. Part of the tripartite efflux system MacAB-TolC. MacB is a non-canonical ABC transporter that contains transmembrane domains (TMD), which form a pore in the inner membrane, and an ATP-binding domain (NBD), which is responsible for energy generation. Confers resistance against macrolides. The protein is Macrolide export ATP-binding/permease protein MacB of Escherichia coli.